The primary structure comprises 187 residues: Tetraheme c-type cytochrome CymA (187 aa).

At 1–12 (MNWRALFKPSAK) the chain is on the cytoplasmic side. A helical membrane pass occupies residues 13 to 33 (YSILALLVVGIVIGVVGYFAT). The Periplasmic segment spans residues 34-187 (QQTLHATSTD…KGVAHPYPKG (154 aa)). Heme c is bound by residues C46, C49, H64, C75, C78, H79, D97, C136, C139, H140, C173, C176, H177, and H182.

This sequence belongs to the NapC/NirT/NrfH family. As to quaternary structure, homodimer. Requires heme c as cofactor.

The protein localises to the cell inner membrane. It catalyses the reaction a quinol + 2 Fe(III)-[cytochrome c](out) = a quinone + 2 Fe(II)-[cytochrome c](out) + 2 H(+)(out). With respect to regulation, spectroscopic studies suggest that CymA requires a non-heme cofactor for quinol oxidation. Quinol dehydrogenase involved in several anaerobic electron transfer pathways. Acquires electrons from the membrane quinone pool and mediates their transfer to several periplasmic terminal reductases and redox shuttles, including the fumarate reductase FccA, the small tetraheme cytochrome (STC), the c-type cytochrome MtrA, the nitrate reductase NapA (either through NapB or directly), the nitrite reductase NrfA and probably also the DmsE subunit of dimethyl sulfoxide (DMSO) reductase. Required for growth on fumarate and on DMSO, and for the reduction of iron(III), manganese(IV), nitrite and nitrate. Not essential for growth on trimethylamine-N-oxide (TMAO). The sequence is that of Tetraheme c-type cytochrome CymA from Shewanella oneidensis (strain ATCC 700550 / JCM 31522 / CIP 106686 / LMG 19005 / NCIMB 14063 / MR-1).